The following is a 91-amino-acid chain: C-C motif chemokine 5 (91 aa).

The signal sequence occupies residues 1–23 (MKVSAARLAVILVATALCAPASA). 2 cysteine pairs are disulfide-bonded: Cys33–Cys57 and Cys34–Cys73.

This sequence belongs to the intercrine beta (chemokine CC) family.

The protein resides in the secreted. Chemoattractant for blood monocytes, memory T-helper cells and eosinophils. Causes the release of histamine from basophils and activates eosinophils. May activate several chemokine receptors including CCR1, CCR3, CCR4 and CCR5. May also be an agonist of the G protein-coupled receptor GPR75. Together with GPR75, may play a role in neuron survival through activation of a downstream signaling pathway involving the PI3, Akt and MAP kinases. By activating GPR75 may also play a role in insulin secretion by islet cells. The chain is C-C motif chemokine 5 (CCL5) from Macaca mulatta (Rhesus macaque).